Consider the following 444-residue polypeptide: MERKVSFELDALWQERHDDEHKIRRDDHRSPYQRDRARILHSAAFRRLQAKTQVHGNSLEDFHRTRLTHSLEAAQLGTGIVAQLKKKQPEFRDLLPSDSLIDSLCLAHDIGHPPYGHGGEVALNYMMREHGGFEGNAQTFRIVTKLEPYTEHFGMNLSRRALLGLIKYPALLSQTRAVCLPKPVEHQRKLKAKDWSPAKGIYDCDKDLFDWVIAPLTDNDKALLSQMRCRPESDFEHCKTRFKSLDCSIMELADDIAYGVHDLEDAIVLGMVTRQQWQEGAASQLADCGDAWFEEHIGSIGQMLFSGKHHERKDAIGGMVNALLTSISIKVVDEPFSNPLLAWNACLEPQMAKALEVLKHFVSKYVIQVHQVQIVEYKGQQIIMDLFEALSADPERLLPTHTQALWQEVANESAKMRVIADYISAMTDGHAQKLHRQLFSSIVL.

The 194-residue stretch at 66-259 (RLTHSLEAAQ…MELADDIAYG (194 aa)) folds into the HD domain.

It belongs to the dGTPase family. Type 2 subfamily.

The polypeptide is Deoxyguanosinetriphosphate triphosphohydrolase-like protein (Vibrio campbellii (strain ATCC BAA-1116)).